The following is a 344-amino-acid chain: Anthranilate phosphoribosyltransferase (344 aa).

5-phospho-alpha-D-ribose 1-diphosphate is bound by residues Gly-86, 89–90 (GD), Thr-94, 96–99 (NIST), 114–122 (KHGNKSASG), and Ser-126. Position 86 (Gly-86) interacts with anthranilate. Ser-98 contacts Mg(2+). Asn-117 is a binding site for anthranilate. Arg-172 contributes to the anthranilate binding site. Residues Asp-231 and Glu-232 each coordinate Mg(2+).

The protein belongs to the anthranilate phosphoribosyltransferase family. Homodimer. The cofactor is Mg(2+).

The enzyme catalyses N-(5-phospho-beta-D-ribosyl)anthranilate + diphosphate = 5-phospho-alpha-D-ribose 1-diphosphate + anthranilate. It functions in the pathway amino-acid biosynthesis; L-tryptophan biosynthesis; L-tryptophan from chorismate: step 2/5. In terms of biological role, catalyzes the transfer of the phosphoribosyl group of 5-phosphorylribose-1-pyrophosphate (PRPP) to anthranilate to yield N-(5'-phosphoribosyl)-anthranilate (PRA). In Prochlorococcus marinus (strain MIT 9301), this protein is Anthranilate phosphoribosyltransferase.